Here is a 383-residue protein sequence, read N- to C-terminus: MGDWSALGKLLDKVQAYSTAGGKVWLSVLFIFRILLLGTAVESAWGDEQSAFRCNTQQPGCENVCYDKSFPISHVRFWVLQIIFVSVPTLLYLAHVFYVMRKEEKLNKKEEELKVVAQTDGANVDMHLKQIEIKKFKYGIEEHGKVKMRGGLLRTYIISILFKSVFEVAFLLIQWYIYGFSLSAVYTCKRDPCPHQVDCFLSRPTEKTIFIIFMLVVSLVSLALNIIELFYVFFKGVKDRVKGKSDPYHTTTGPLSPSKDCGSPKYAYFNGCSSPTAPLSPMSPPGYKLVTGDRNNSSCRNYNKQASEQNWANYSAEQNRMGQAGSTISNSHAQPFDFPDDHQNSKKLDAGHELQPLAIVDQRPSSRASSRASSRPRPDDLEI.

The Cytoplasmic segment spans residues 2-23 (GDWSALGKLLDKVQAYSTAGGK). Ser5 bears the Phosphoserine mark. Residues 24-44 (VWLSVLFIFRILLLGTAVESA) traverse the membrane as a helical segment. The Extracellular segment spans residues 45–76 (WGDEQSAFRCNTQQPGCENVCYDKSFPISHVR). Cystine bridges form between Cys54-Cys193 and Cys188-Cys199. A helical transmembrane segment spans residues 77 to 97 (FWVLQIIFVSVPTLLYLAHVF). Topologically, residues 98–156 (YVMRKEEKLNKKEEELKVVAQTDGANVDMHLKQIEIKKFKYGIEEHGKVKMRGGLLRTY) are cytoplasmic. Residue Lys145 forms a Glycyl lysine isopeptide (Lys-Gly) (interchain with G-Cter in SUMO) linkage. A helical transmembrane segment spans residues 157–177 (IISILFKSVFEVAFLLIQWYI). Residues 178–208 (YGFSLSAVYTCKRDPCPHQVDCFLSRPTEKT) are Extracellular-facing. Residues 209-229 (IFIIFMLVVSLVSLALNIIEL) form a helical membrane-spanning segment. Topologically, residues 230 to 383 (FYVFFKGVKD…SRPRPDDLEI (154 aa)) are cytoplasmic. Residue Lys238 forms a Glycyl lysine isopeptide (Lys-Gly) (interchain with G-Cter in SUMO) linkage. The interval 245-383 (SDPYHTTTGP…SRPRPDDLEI (139 aa)) is interaction with NOV. A Phosphotyrosine modification is found at Tyr248. A phosphoserine mark is found at Ser256, Ser258, and Ser263. Residues 265-383 (KYAYFNGCSS…SRPRPDDLEI (119 aa)) are interaction with UBQLN4. Cys272 bears the S-nitrosocysteine mark. Residue Thr276 is modified to Phosphothreonine. A phosphoserine mark is found at Ser307 and Ser315. The span at 318-333 (QNRMGQAGSTISNSHA) shows a compositional bias: polar residues. Residues 318 to 383 (QNRMGQAGST…SRPRPDDLEI (66 aa)) are disordered. The residue at position 326 (Ser326) is a Phosphoserine; by CK1. Thr327 is modified (phosphothreonine). Phosphoserine; by CK1 is present on residues Ser329 and Ser331. The span at 339–352 (PDDHQNSKKLDAGH) shows a compositional bias: basic and acidic residues. 2 positions are modified to phosphoserine: Ser345 and Ser366. Low complexity predominate over residues 363–375 (RPSSRASSRASSR). The residue at position 369 (Ser369) is a Phosphoserine; by PKC/PRKCG and PKC/PRKCD. A phosphoserine mark is found at Ser370 and Ser374.

The protein belongs to the connexin family. Alpha-type (group II) subfamily. A connexon is composed of a hexamer of connexins. Interacts with SGSM3. Interacts with RIC1/CIP150. Interacts with CNST and CSNK1D. Interacts (via C-terminus) with TJP1. Interacts (via C-terminus) with SRC (via SH3 domain). Interacts (not ubiquitinated) with UBQLN4 (via UBA domain). Interacts with NOV. Interacts with TMEM65. Interacts with ANK3/ANKG and PKP2. Phosphorylation at Ser-326, Ser-329 and Ser-331 by CK1 modulates gap junction assembly. Phosphorylated at Ser-369 by PRKCG; phosphorylation induces disassembly of gap junction plaques and inhibition of gap junction activity. Phosphorylation at Ser-369 by PRKCD triggers its internalization into small vesicles leading to proteasome-mediated degradation. In terms of processing, sumoylated with SUMO1, SUMO2 and SUMO3, which may regulate the level of functional Cx43 gap junctions at the plasma membrane. May be desumoylated by SENP1 or SENP2. Post-translationally, acetylated in the developing cortex; leading to delocalization from the cell membrane.

It is found in the cell membrane. It localises to the cell junction. The protein localises to the gap junction. The protein resides in the endoplasmic reticulum. Its function is as follows. Gap junction protein that acts as a regulator of bladder capacity. A gap junction consists of a cluster of closely packed pairs of transmembrane channels, the connexons, through which materials of low MW diffuse from one cell to a neighboring cell. May play a critical role in the physiology of hearing by participating in the recycling of potassium to the cochlear endolymph. Negative regulator of bladder functional capacity: acts by enhancing intercellular electrical and chemical transmission, thus sensitizing bladder muscles to cholinergic neural stimuli and causing them to contract. May play a role in cell growth inhibition through the regulation of NOV expression and localization. Plays an essential role in gap junction communication in the ventricles. This Bos taurus (Bovine) protein is Gap junction alpha-1 protein (GJA1).